The chain runs to 3966 residues: Histone-lysine N-methyltransferase 2A (3966 aa).

2 disordered regions span residues 1–106 and 130–231; these read MAHS…LLRV and VFGE…GVKI. The short motif at 6–25 is the Menin-binding motif (MBM) element; the sequence is RWRFPARPGTTGGGGGGGRR. The segment covering 15–29 has biased composition (gly residues); it reads TTGGGGGGGRRGLGG. Over residues 75-102 the composition is skewed to low complexity; that stretch reads GAAAASAASSSSASSSSSSSSSASSGPA. Positions 121-132 match the Integrase domain-binding motif 1 (IBM1) motif; sequence GTNLRRFRAVFG. Residues serine 134 and serine 140 each carry the phosphoserine; by CK2 modification. Residues 145–150 carry the Integrase domain-binding motif 2 (IBM2) motif; the sequence is QFLGFG. A Phosphoserine modification is found at serine 151. A DNA-binding region (a.T hook 1) is located at residues 167–178; that stretch reads KASPRKPRGRPR. A Phosphoserine modification is found at serine 195. The span at 200–218 shows a compositional bias: basic and acidic residues; the sequence is SETKSADKIKKKDSKSIEK. A DNA-binding region (a.T hook 2) is located at residues 215 to 225; that stretch reads SIEKKRGRPPT. N6-acetyllysine is present on lysine 237. The a.T hook 3 DNA-binding region spans 299 to 307; the sequence is RRRGRPPST. A disordered region spans residues 322–343; sequence LEKPQKVRKDKEGTPPLTKEDK. Lysine 371 carries the N6-acetyllysine modification. A disordered region spans residues 440–590; it reads RLESTPNSRF…PWLMPPTIPL (151 aa). A compositionally biased stretch (low complexity) spans 450 to 489; that stretch reads SATSCGSSEKSSAASQHSSQMSSDSSRSSSPSIDTTSDSQ. Serine 516 carries the post-translational modification Phosphoserine. Over residues 544 to 557 the composition is skewed to low complexity; sequence LPTLQSAPQQQTSS. Residues 558-571 show a composition bias toward pro residues; that stretch reads SPPPPLLTPPPPLQ. Lysine 634 is modified (N6-acetyllysine). Serine 678 carries the phosphoserine modification. 4 disordered regions span residues 711–943, 963–1003, 1034–1064, and 1101–1161; these read ESVT…ADVA, RGNL…TSSI, IEKS…RGPR, and ILSS…CQVP. Low complexity-rich tracts occupy residues 717–730 and 760–790; these read SNRT…SGVS and LSTS…ASAL. Composition is skewed to polar residues over residues 791-806 and 817-830; these read NPTF…QSGE and QTSA…SNSP. Threonine 837 carries the post-translational modification Phosphothreonine. Residues 843–887 show a composition bias toward basic and acidic residues; sequence EKGRKKDTAPEELSKDRDADKSVEKDKSRERDREREKENKRESRK. Phosphoserine is present on serine 923. Over residues 989 to 1003 the composition is skewed to low complexity; the sequence is SAPSSSTVKHSTSSI. The segment covering 1040–1059 has biased composition (polar residues); it reads LKQTDQPKAQGQESDSSETS. Serine 1053 is subject to Phosphoserine. Basic and acidic residues predominate over residues 1101-1111; it reads ILSSMGNDDKS. Lysine 1127 is modified (N6-acetyllysine). The CXXC-type zinc-finger motif lies at 1144–1192; it reads KKGRRSRRCGQCPGCQVPEDCGICTNCLDKPKFGGRNIKKQCCKMRKCQ. Residues cysteine 1152, cysteine 1155, cysteine 1158, cysteine 1164, cysteine 1167, cysteine 1170, cysteine 1186, and cysteine 1191 each coordinate Zn(2+). The tract at residues 1196-1390 is disordered; the sequence is WMPSKASLQK…PLSNGISSKQ (195 aa). A compositionally biased stretch (basic and acidic residues) spans 1217–1229; sequence SKTTEKKESKEST. Low complexity predominate over residues 1230–1241; that stretch reads AVKSPLEPAQKA. N6-acetyllysine is present on lysine 1232. Over residues 1245–1270 the composition is skewed to basic and acidic residues; that stretch reads PREEPAPKKSSSEPPPRKPVEEKSEE. The span at 1369–1390 shows a compositional bias: polar residues; it reads KQENAGTLNILNPLSNGISSKQ. 3 PHD-type zinc fingers span residues 1430–1481, 1478–1532, and 1565–1629; these read RVVC…CKFC, CKFC…CVRC, and GNFC…CTER. The interaction with histone H3K4me3 stretch occupies residues 1583-1599; that stretch reads KMMQCGKCDRWVHSKCE. The Bromo domain maps to 1637 to 1767; that stretch reads ALEKELQASL…SFFIRQMERV (131 aa). Disordered stretches follow at residues 1665–1714 and 1807–1870; these read YRQA…EGVK and WQER…PGID. Positions 1828–1849 are enriched in pro residues; that stretch reads APKPKGPGEPDSPTPLHPPTPP. Residue serine 1839 is modified to Phosphoserine. Threonine 1847 carries the post-translational modification Phosphothreonine. At serine 1860 the chain carries Phosphoserine. The C2HC pre-PHD-type zinc finger occupies 1872–1912; sequence NRQCALCLMYGDDSANDAGRLLYIGQNEWTHVNCALWSAEV. The PHD-type 4 zinc-finger motif lies at 1933–1980; that stretch reads LRCEFCQKPGATVGCCLTSCTSNYHFMCSRAKNCVFLDDKKVYCQRHR. The 57-residue stretch at 2020-2076 folds into the FYR N-terminal domain; the sequence is NIHMMIGSMTIDCLGILNDLSDCEDKLFPIGYQCSRVYWSTTDARKRCVYTCKIMEC. At serine 2100 the chain carries Phosphoserine. A disordered region spans residues 2147 to 2174; sequence RTPSYSPTQRSPGCRPLPSAGSPTPTTH. At threonine 2148 the chain carries Phosphothreonine. 2 positions are modified to phosphoserine: serine 2152 and serine 2202. Disordered stretches follow at residues 2214-2339, 2371-2619, 2639-2673, and 2709-2759; these read VRTG…ATPG, RGQR…SARA, EDIP…SDED, and KISQ…DAGE. Positions 2218–2230 are enriched in low complexity; sequence SAYSRSSVSSVPS. 2 stretches are compositionally biased toward polar residues: residues 2250–2284 and 2308–2320; these read LSSS…SSPS and TSSS…SAHS. Composition is skewed to basic and acidic residues over residues 2411–2422 and 2430–2440; these read ILHEHIGSSSRD and SSKETCKEKHS. Polar residues predominate over residues 2498 to 2509; it reads GQSTQVEGSSKE. Residue lysine 2524 forms a Glycyl lysine isopeptide (Lys-Gly) (interchain with G-Cter in SUMO2) linkage. Residues 2528–2537 are compositionally biased toward polar residues; sequence ENQSKNTQKE. Serine 2560 is subject to Phosphoserine. Residues 2569-2588 are compositionally biased toward polar residues; that stretch reads PSPNNTLSQDPQSNNYQNLP. At serine 2607 the chain carries Phosphoserine. Residues 2609–2618 are compositionally biased toward basic residues; the sequence is KRRYPRRSAR. Positions 2663 to 2673 are enriched in acidic residues; sequence GADDLSTSDED. Residues 2722–2737 show a composition bias toward polar residues; that stretch reads SDTSVTATSRKSSQIP. Residues 2740 to 2759 are compositionally biased toward basic and acidic residues; that stretch reads NGKENGTENLKIDRPEDAGE. Phosphoserine is present on serine 2792. A 9aaTAD motif is present at residues 2843 to 2851; it reads SDIMDFVLK. Position 2951 is a phosphoserine (serine 2951). Lysine 2954 is subject to N6-acetyllysine. Disordered regions lie at residues 2958-3060 and 3164-3239; these read ITEK…NAAV and AAQS…PSNI. Positions 3012-3025 are enriched in polar residues; it reads HGNSQDLTRNSGTP. Serine 3032 is modified (phosphoserine). Positions 3035-3060 are enriched in polar residues; it reads VPVQNQKYVPSSTDSPGPSQISNAAV. Residues 3167 to 3178 show a composition bias toward low complexity; the sequence is SSFPPNISSPPS. The span at 3196–3212 shows a compositional bias: polar residues; the sequence is EANQRTDLTTTVATPSS. A compositionally biased stretch (basic residues) spans 3214 to 3229; that stretch reads LKKRPISRLHTRKNKK. Threonine 3369 is subject to Phosphothreonine. Lysine 3459 bears the N6-acetyllysine mark. Residues 3462–3640 form a disordered region; sequence TLTSQRDRDP…AMEEEESGFS (179 aa). Residues 3475–3487 are compositionally biased toward polar residues; the sequence is PGTQPSNFTQTAE. The segment covering 3501–3528 has biased composition (low complexity); the sequence is PSAKPASSASPGSSPSSGQQSGSSSVPG. Serine 3510 and serine 3523 each carry phosphoserine. Basic and acidic residues predominate over residues 3558 to 3570; sequence TSSEAHIPHRDTD. One can recognise an FYR C-terminal domain in the interval 3663 to 3744; that stretch reads KKGLVFEISS…KHCRNYKFRF (82 aa). The short motif at 3759 to 3764 is the WDR5 interaction motif (WIN) element; the sequence is GSARAE. Residues 3782–3805 form a disordered region; it reads HRQPPEYNPNDEEEEEVQLKSARR. Residues 3826–3942 form the SET domain; that stretch reads EAVGVYRSPI…RGEELTYDYK (117 aa). S-adenosyl-L-methionine contacts are provided by histidine 3836 and arginine 3838. At cysteine 3879 the chain carries S-methylcysteine; by autocatalysis. S-adenosyl-L-methionine is bound by residues tyrosine 3880 and 3903–3904; that span reads NH. Cysteine 3906 and cysteine 3954 together coordinate Zn(2+). Positions 3950-3966 constitute a Post-SET domain; sequence NKLPCNCGAKKCRKFLN. Residue asparagine 3955 participates in S-adenosyl-L-methionine binding. Zn(2+) is bound by residues cysteine 3956 and cysteine 3961.

It belongs to the class V-like SAM-binding methyltransferase superfamily. Histone-lysine methyltransferase family. TRX/MLL subfamily. As to quaternary structure, MLL cleavage product N320 heterodimerizes with MLL cleavage product C180 (via SET and FYRC domains). Component of some MLL1/MLL complex, at least composed of the core components KMT2A/MLL1, ASH2L, HCFC1/HCF1, HCFC2, WDR5, DPY30 and RBBP5, as well as the facultative components BACC1, CHD8, E2F6, HSP70, INO80C, KANSL1, LAS1L, MAX, MCRS1, MEN1, MGA, KAT8/MOF, PELP1, PHF20, PRP31, RING2, RUVB1/TIP49A, RUVB2/TIP49B, SENP3, TAF1, TAF4, TAF6, TAF7, TAF9 and TEX10. Interacts (via WIN motif) with WDR5; the interaction is direct. Interaction with WDR5 is required for stable interaction with ASH2L and RBBP5, and thereby also for optimal histone methyltransferase activity. Interacts with KAT8/MOF; the interaction is direct. Interacts with SBF1 and PPP1R15A. Interacts with ZNF335. Interacts with CLOCK and BMAL1 in a circadian manner. Interacts with PPIE; this results in decreased histone H3 methyltransferase activity. Interacts with CREBBP. Interacts with the WRAD complex composed of WDR5, RBBP5, ASH2L and DPY30. Interacts (via MBM motif) with MEN1. Interacts (via IBM motifs) with PSIP1 (via IBD domain) with moderate affinity whereas the KMT2A-MEN1 complex interacts with a greater affinity; MEN1 enhances interaction of KMT2A with PSIP1. Phosphorylation increases its affinity for PSIP1. Forms a complex with CREBBP and CREB1. Post-translationally, proteolytic cleavage by TASP1 generates MLL cleavage 3product N320 and MLL cleavage product C180, which reassemble through a non-covalent association. 2 cleavage sites exist, cleavage site 1 (CS1) and cleavage site 2 (CS2), to generate MLL cleavage products N320 and C180. CS2 is the major site. In terms of processing, phosphorylation increases its interaction with PSIP1. Auto-methylated at Cys-3879: auto-methylation is inhibited by the WRAD complex and unmodified histone H3.

It is found in the nucleus. The catalysed reaction is L-lysyl(4)-[histone H3] + S-adenosyl-L-methionine = N(6)-methyl-L-lysyl(4)-[histone H3] + S-adenosyl-L-homocysteine + H(+). It catalyses the reaction N(6)-methyl-L-lysyl(4)-[histone H3] + S-adenosyl-L-methionine = N(6),N(6)-dimethyl-L-lysyl(4)-[histone H3] + S-adenosyl-L-homocysteine + H(+). It carries out the reaction L-cysteinyl-[protein] + S-adenosyl-L-methionine = S-methyl-L-cysteinyl-[protein] + S-adenosyl-L-homocysteine + H(+). Functionally, histone methyltransferase that plays an essential role in early development and hematopoiesis. Catalytic subunit of the MLL1/MLL complex, a multiprotein complex that mediates both methylation of 'Lys-4' of histone H3 (H3K4me) complex and acetylation of 'Lys-16' of histone H4 (H4K16ac). Catalyzes methyl group transfer from S-adenosyl-L-methionine to the epsilon-amino group of 'Lys-4' of histone H3 (H3K4) via a non-processive mechanism. Part of chromatin remodeling machinery predominantly forms H3K4me1 and H3K4me2 methylation marks at active chromatin sites where transcription and DNA repair take place. Has weak methyltransferase activity by itself, and requires other component of the MLL1/MLL complex to obtain full methyltransferase activity. Has no activity toward histone H3 phosphorylated on 'Thr-3', less activity toward H3 dimethylated on 'Arg-8' or 'Lys-9', while it has higher activity toward H3 acetylated on 'Lys-9'. Binds to unmethylated CpG elements in the promoter of target genes and helps maintain them in the nonmethylated state. Required for transcriptional activation of HOXA9. Promotes PPP1R15A-induced apoptosis. Plays a critical role in the control of circadian gene expression and is essential for the transcriptional activation mediated by the CLOCK-BMAL1 heterodimer. Establishes a permissive chromatin state for circadian transcription by mediating a rhythmic methylation of 'Lys-4' of histone H3 (H3K4me) and this histone modification directs the circadian acetylation at H3K9 and H3K14 allowing the recruitment of CLOCK-BMAL1 to chromatin. Also has auto-methylation activity on Cys-3879 in absence of histone H3 substrate. In Mus musculus (Mouse), this protein is Histone-lysine N-methyltransferase 2A (Kmt2a).